Consider the following 560-residue polypeptide: Diphtheria toxin (560 aa).

An N-terminal signal peptide occupies residues 1–25 (MSRKLFASILIGALLGIGAPPSAHA). Positions 46 and 90 each coordinate NAD(+). Glu173 is a catalytic residue. 2 cysteine pairs are disulfide-bonded: Cys211–Cys226 and Cys486–Cys496.

Homodimer.

It catalyses the reaction diphthamide-[translation elongation factor 2] + NAD(+) = N-(ADP-D-ribosyl)diphthamide-[translation elongation factor 2] + nicotinamide + H(+). Functionally, diphtheria toxin, produced by a phage infecting Corynebacterium diphtheriae, is a proenzyme that, after activation, catalyzes the covalent attachment of the ADP ribose moiety of NAD to elongation factor 2. Fragment A is responsible for enzymatic ADP-ribosylation of elongation factor 2, while fragment B is responsible for binding of toxin to cell receptors and entry of fragment A. This Corynephage omega protein is Diphtheria toxin.